Here is a 561-residue protein sequence, read N- to C-terminus: Lengsin (561 aa).

Disordered stretches follow at residues 1 to 78 (MNDE…WHNA) and 91 to 112 (SLPSAGAPDAEFNPNTDHTRDN). Basic residues predominate over residues 26 to 37 (NKLKRTRRKVTK). The span at 50-63 (MANSREMSRNQTAD) shows a compositional bias: polar residues. A GS beta-grasp domain is found at 135–229 (NHLQFVRFEA…VICDTFTVTG (95 aa)). The GS catalytic domain occupies 236-561 (PRYIAKRQLR…EGNKFLEYFI (326 aa)).

This sequence belongs to the glutamine synthetase family. As to quaternary structure, dodecamer. Interacts with BFSP2 and VIM. As to expression, expressed in lens.

In terms of biological role, may act as a component of the cytoskeleton or as a chaperone for the reorganization of intermediate filament proteins during terminal differentiation in the lens. Does not seem to have enzymatic activity. The protein is Lengsin (Lgsn) of Rattus norvegicus (Rat).